We begin with the raw amino-acid sequence, 272 residues long: Tryptophan synthase alpha chain (272 aa).

Catalysis depends on proton acceptor residues E49 and D60.

The protein belongs to the TrpA family. In terms of assembly, tetramer of two alpha and two beta chains.

It catalyses the reaction (1S,2R)-1-C-(indol-3-yl)glycerol 3-phosphate + L-serine = D-glyceraldehyde 3-phosphate + L-tryptophan + H2O. The protein operates within amino-acid biosynthesis; L-tryptophan biosynthesis; L-tryptophan from chorismate: step 5/5. Its function is as follows. The alpha subunit is responsible for the aldol cleavage of indoleglycerol phosphate to indole and glyceraldehyde 3-phosphate. The protein is Tryptophan synthase alpha chain of Methylibium petroleiphilum (strain ATCC BAA-1232 / LMG 22953 / PM1).